The sequence spans 982 residues: Hunchback-like protein (982 aa).

A disordered region spans residues 87 to 194 (QPGEKIHPDG…SNYQVTSEPV (108 aa)). Residues 101–110 (PKEDGRKSSE) show a composition bias toward basic and acidic residues. Polar residues predominate over residues 111 to 132 (HTNSYDVSASQSPSNDGAQSDS). The segment covering 142–152 (CMTETEMDTDE) has biased composition (acidic residues). Residues 153 to 175 (KDSTIKPEDQATPKLEEGSDSKP) show a composition bias toward basic and acidic residues. The segment covering 176–193 (ESTSVEGTSSNYQVTSEP) has biased composition (polar residues). 7 consecutive C2H2-type zinc fingers follow at residues 336–358 (LVCPICGFMCPSKFHFNSHMNTH), 361–384 (HQCSMCDYTSRTEGRLKKHMRESH), 538–560 (FKCKQCGHQSLSKDDQWAHARTH), 567–589 (LNCQHCNFVTEYKHHLEYHYRNH), 595–617 (FQCKKCAYNCVNKSMLNSHMKSH), 623–647 (FRCMDCTYATKYCHSLKLHLKKYNH), and 734–756 (LKCSACDFVASSADEKMRHSMSH). Residues 377-415 (KKHMRESHTVEEQLRAGFESEPAKESASSPKNLSLSKDG) form a disordered region. The interval 811–896 (EEMDQGSDSA…PPLHSSSIVA (86 aa)) is disordered. 2 stretches are compositionally biased toward polar residues: residues 816-831 (GSDSAVSPTGSSQISS) and 843-862 (SLEQISARANGNNSPMSNDS). Residues 863–875 (AMEKDGESADDAP) show a composition bias toward basic and acidic residues. C2H2-type zinc fingers lie at residues 929 to 951 (FYCDHCKIPFDTQQVLDSHMRFH) and 957 to 981 (FMCSDCQYQAFNELSFALHMYQARH).

It belongs to the hunchback C2H2-type zinc-finger protein family. As to expression, expressed primarily in ectodermal cells during embryonic and larval development.

It localises to the nucleus. Its function is as follows. Required for the late stages of development. Plays a role in the developmental timing of postembryonic hypodermal seam cell fusion events and adult alae production. In Caenorhabditis elegans, this protein is Hunchback-like protein.